The chain runs to 132 residues: Intraflagellar transport protein 20 homolog A (132 aa).

Residues 87-112 adopt a coiled-coil conformation; it reads EAQQQQLYALIAEKKMQLERYRIEYD.

It localises to the golgi apparatus. The protein localises to the cis-Golgi network. The protein resides in the cytoplasm. It is found in the cytoskeleton. Its subcellular location is the microtubule organizing center. It localises to the centrosome. The protein localises to the centriole. The protein resides in the cell projection. It is found in the cilium. Functionally, involved in ciliary process assembly. May play a role in the trafficking of ciliary membrane proteins from the Golgi complex to the cilium. Regulates the platelet-derived growth factor receptor-alpha (PDGFRA) signaling pathway. Plays an important role in spermatogenesis, particularly spermiogenesis, when germ cells form flagella. This Xenopus laevis (African clawed frog) protein is Intraflagellar transport protein 20 homolog A (ift20-a).